We begin with the raw amino-acid sequence, 291 residues long: B3 domain-containing protein At2g16210 (291 aa).

Residues 19-114 (FFKVVQSINV…HFTVNIFKLD (96 aa)) constitute a DNA-binding region (TF-B3 1). Residues 149–159 (VSSNRGQTTAA) show a composition bias toward polar residues. The tract at residues 149–182 (VSSNRGQTTAAESKGRKLNLGKRAAKESQSSKRT) is disordered. A compositionally biased stretch (basic and acidic residues) spans 172–182 (AAKESQSSKRT). A DNA-binding region (TF-B3 2) is located at residues 200–291 (AAAFTILFKQ…KELLLVVSKP (92 aa)).

The protein localises to the nucleus. The polypeptide is B3 domain-containing protein At2g16210 (Arabidopsis thaliana (Mouse-ear cress)).